The sequence spans 213 residues: Ribonuclease HII (213 aa).

Residues 27–213 (HAVAGVDEAG…FRGVKEHVAP (187 aa)) enclose the RNase H type-2 domain. The a divalent metal cation site is built by Asp-33, Glu-34, and Asp-125.

This sequence belongs to the RNase HII family. The cofactor is Mn(2+). Mg(2+) serves as cofactor.

It localises to the cytoplasm. The enzyme catalyses Endonucleolytic cleavage to 5'-phosphomonoester.. In terms of biological role, endonuclease that specifically degrades the RNA of RNA-DNA hybrids. The sequence is that of Ribonuclease HII from Geobacter metallireducens (strain ATCC 53774 / DSM 7210 / GS-15).